The primary structure comprises 180 residues: PRA1 family protein F1 (180 aa).

The next 4 membrane-spanning stretches (helical) occupy residues 63-83 (ANTV…VFLS), 84-104 (LIWN…WLFL), 123-143 (IVLI…DAKL), and 145-165 (IAVA…VRKT).

Belongs to the PRA1 family. Interacts with PRA1F2. In terms of tissue distribution, expressed in hypocotyls, leaf bases and shoot apex.

Its subcellular location is the endosome membrane. Its function is as follows. May be involved in both secretory and endocytic intracellular trafficking in the endosomal/prevacuolar compartments. This chain is PRA1 family protein F1 (PRA1F1), found in Arabidopsis thaliana (Mouse-ear cress).